The following is a 147-amino-acid chain: Large ribosomal subunit protein uL15 (147 aa).

Residues 1 to 42 (MTIKVHHLRPAPGAKTTKTRVGRGEGSKGKTAGRGTKGSKAR) are disordered.

It belongs to the universal ribosomal protein uL15 family. In terms of assembly, part of the 50S ribosomal subunit.

Functionally, binds to the 23S rRNA. This chain is Large ribosomal subunit protein uL15, found in Salinispora tropica (strain ATCC BAA-916 / DSM 44818 / JCM 13857 / NBRC 105044 / CNB-440).